The primary structure comprises 717 residues: Radial spoke head protein 6 homolog A (717 aa).

Disordered regions lie at residues M1–Q65, S503–N523, T563–G588, and G672–D717. Composition is skewed to acidic residues over residues S503 to G513, E564 to Q585, and T700 to D717.

This sequence belongs to the flagellar radial spoke RSP4/6 family. In terms of assembly, component of the axonemal radial spoke 1 (RS1) and 2 (RS2) complexes, at least composed of spoke head proteins RSPH1, RSPH3, RSPH9 and the cilia-specific component RSPH4A or sperm-specific component RSPH6A, spoke stalk proteins RSPH14, DNAJB13, DYDC1, ROPN1L and NME5, and the RS1 complex-specific anchor protein IQUB. Interacts with RSPH1. Interacts with RSPH3B. Interacts with RSPH4A. Interacts with RSPH9. Interacts with RSPH10B. In terms of processing, phosphorylated by PKA. Phosphorylation increases in capacitated sperm.

The protein localises to the cytoplasm. The protein resides in the cytoskeleton. It is found in the flagellum axoneme. Functionally, functions as part of radial spoke complexes in the axoneme of sperm flagella that play an important part in motility. The triple radial spokes (RS1, RS2 and RS3) are required to modulate beating of the sperm flagellum. In Homo sapiens (Human), this protein is Radial spoke head protein 6 homolog A.